The chain runs to 158 residues: Arginine repressor (158 aa).

This sequence belongs to the ArgR family.

It is found in the cytoplasm. The protein operates within amino-acid biosynthesis; L-arginine biosynthesis [regulation]. Its function is as follows. Regulates arginine biosynthesis genes. The protein is Arginine repressor of Phocaeicola vulgatus (strain ATCC 8482 / DSM 1447 / JCM 5826 / CCUG 4940 / NBRC 14291 / NCTC 11154) (Bacteroides vulgatus).